The chain runs to 289 residues: 4-diphosphocytidyl-2-C-methyl-D-erythritol kinase (289 aa).

Lys-11 is an active-site residue. Position 95–105 (95–105 (PMGGGIGGGSS)) interacts with ATP. Asp-137 is a catalytic residue.

It belongs to the GHMP kinase family. IspE subfamily.

It catalyses the reaction 4-CDP-2-C-methyl-D-erythritol + ATP = 4-CDP-2-C-methyl-D-erythritol 2-phosphate + ADP + H(+). The protein operates within isoprenoid biosynthesis; isopentenyl diphosphate biosynthesis via DXP pathway; isopentenyl diphosphate from 1-deoxy-D-xylulose 5-phosphate: step 3/6. Functionally, catalyzes the phosphorylation of the position 2 hydroxy group of 4-diphosphocytidyl-2C-methyl-D-erythritol. In Aeromonas hydrophila subsp. hydrophila (strain ATCC 7966 / DSM 30187 / BCRC 13018 / CCUG 14551 / JCM 1027 / KCTC 2358 / NCIMB 9240 / NCTC 8049), this protein is 4-diphosphocytidyl-2-C-methyl-D-erythritol kinase.